The sequence spans 328 residues: Serine protease 48 (328 aa).

The first 20 residues, 1-20, serve as a signal peptide directing secretion; the sequence is MGPAGCAFTLLLLLGISVCG. The Peptidase S1 domain maps to 28–267; that stretch reads VVGGQDAAAG…YQKWINATIS (240 aa). Cys-53 and Cys-69 are joined by a disulfide. Residues His-68 and Asp-114 each act as charge relay system in the active site. 3 disulfides stabilise this stretch: Cys-148–Cys-226, Cys-181–Cys-205, and Cys-216–Cys-244. The active-site Charge relay system is the Ser-220. The N-linked (GlcNAc...) asparagine glycan is linked to Asn-263.

The protein belongs to the peptidase S1 family.

It is found in the secreted. The sequence is that of Serine protease 48 (PRSS48) from Homo sapiens (Human).